We begin with the raw amino-acid sequence, 251 residues long: Haloacid dehalogenase-like hydrolase domain-containing protein 3 (251 aa).

K15 carries the post-translational modification N6-acetyllysine; alternate. Residue K15 is modified to N6-succinyllysine; alternate.

Belongs to the HAD-like hydrolase superfamily.

The sequence is that of Haloacid dehalogenase-like hydrolase domain-containing protein 3 (HDHD3) from Homo sapiens (Human).